Consider the following 186-residue polypeptide: T-cell receptor-associated transmembrane adapter 1 (186 aa).

Over 1–7 (MSGISGC) the chain is Extracellular. A helical; Signal-anchor for type III membrane protein membrane pass occupies residues 8 to 28 (PFFLWGLLALLGLALVISLIF). Residues 29–186 (NISHYVEKQR…LIRAKREPIN (158 aa)) lie on the Cytoplasmic side of the membrane. Position 46 is a phosphoserine (Ser46). Tyr79 is modified (phosphotyrosine). An interaction with PIK3R1 region spans residues 79–82 (YEQM). Positions 116–140 (SVKGKRRKPRKQNTHFSDKDGDEQL) are disordered. The span at 118 to 128 (KGKRRKPRKQN) shows a compositional bias: basic residues. Positions 131–140 (FSDKDGDEQL) are enriched in basic and acidic residues.

As to quaternary structure, homodimer; disulfide-linked. Interacts with CD3Z. When phosphorylated, interacts with PIK3R1. Phosphorylated on tyrosines by LCK or FYN upon TCR activation. As to expression, strongly expressed in thymus, and to a lesser extent in spleen, lymph node and peripheral blood lymphocytes. Present in T-cells and NK cells, but not B-cells (at protein level).

The protein resides in the cell membrane. Its function is as follows. Stabilizes the TCR (T-cell antigen receptor)/CD3 complex at the surface of T-cells. The chain is T-cell receptor-associated transmembrane adapter 1 (TRAT1) from Homo sapiens (Human).